The sequence spans 571 residues: uncharacterized protein (571 aa).

The next 5 membrane-spanning stretches (helical) occupy residues 10–29 (VRLH…HFIG), 36–55 (VSLG…GLLF), 65–87 (WAFF…FASL), 96–118 (ALAV…LFRF), and 166–188 (ATTY…PRLL). The 85-residue stretch at 294–378 (TEVDDQELLS…IATAARNLGF (85 aa)) folds into the RCK C-terminal domain. Helical transmembrane passes span 388–406 (LVYL…LLQV), 411–433 (VPLG…WLYS), 446–465 (LRLL…GLAA), 480–502 (LFAK…GLLL), 509–531 (LPPI…LNAL), and 546–568 (VPFA…CAVA).

Belongs to the AAE transporter (TC 2.A.81) family.

It localises to the cell membrane. This is an uncharacterized protein from Bordetella bronchiseptica (strain ATCC BAA-588 / NCTC 13252 / RB50) (Alcaligenes bronchisepticus).